A 203-amino-acid chain; its full sequence is MGRQGNIHRVTGETEVRVAIGLDGSGQCEVSTGVPFLDHMLHQLASHGLFDLTISATGDTHIDDHHTNEDVGIALGQALGQALADRRGIHRFGHFVAPLDEALVQVALDCSGRPHVSYSLAIPAQKIGSYDTELVKEFFVAVANNAGLTLHIRQLDGVNSHHIVEACFKAFARALRMATEIDPRRASAIPSSKGVLEQAGTTG.

It belongs to the imidazoleglycerol-phosphate dehydratase family.

It localises to the cytoplasm. The enzyme catalyses D-erythro-1-(imidazol-4-yl)glycerol 3-phosphate = 3-(imidazol-4-yl)-2-oxopropyl phosphate + H2O. It participates in amino-acid biosynthesis; L-histidine biosynthesis; L-histidine from 5-phospho-alpha-D-ribose 1-diphosphate: step 6/9. In Synechococcus sp. (strain RCC307), this protein is Imidazoleglycerol-phosphate dehydratase.